Here is a 501-residue protein sequence, read N- to C-terminus: Group 3 secretory phospholipase A2 (501 aa).

The signal sequence occupies residues 1–19; sequence MGVLVVLLGVLSFLGRTLG. Residues 119–139 form a disordered region; it reads RGPAESPAGTREKRAAGQNGV. The phospholipase A2-like stretch occupies residues 150–291; that stretch reads GWTVPGTLWC…SWSSPATSLT (142 aa). Ca(2+)-binding residues include tryptophan 158, glycine 160, and glycine 162. Intrachain disulfides connect cysteine 159/cysteine 181, cysteine 180/cysteine 220, cysteine 187/cysteine 213, and cysteine 211/cysteine 244. Residue asparagine 167 is glycosylated (N-linked (GlcNAc...) asparagine). Histidine 184 is a catalytic residue. Aspartate 185 serves as a coordination point for Ca(2+). Aspartate 214 is a catalytic residue. Asparagine 280 is a glycosylation site (N-linked (GlcNAc...) asparagine). Residues 284 to 298 are compositionally biased toward polar residues; sequence SSPATSLTPSPQNPA. Residues 284–339 are disordered; the sequence is SSPATSLTPSPQNPALSRPQPMQHPQQWPSEWKESKSPSKTNATALQAPVASPGSD. N-linked (GlcNAc...) asparagine glycosylation is found at asparagine 325 and asparagine 403.

This sequence belongs to the phospholipase A2 family. The cofactor is Ca(2+). In terms of processing, N-glycosylation does not affect the catalytic activity, but is required for proper secretion. A nonglycosylated form was observed in several cell types. Post-translationally, in several cell types, the N- and C-termini are cleaved off.

It is found in the secreted. The protein localises to the cell membrane. The protein resides in the cytoplasm. Its subcellular location is the cytoskeleton. It localises to the microtubule organizing center. It is found in the centrosome. The protein localises to the centriole. The protein resides in the recycling endosome. The enzyme catalyses a 1,2-diacyl-sn-glycero-3-phosphocholine + H2O = a 1-acyl-sn-glycero-3-phosphocholine + a fatty acid + H(+). It catalyses the reaction 1-hexadecanoyl-2-(9Z,12Z-octadecadienoyl)-sn-glycero-3-phosphocholine + H2O = (9Z,12Z)-octadecadienoate + 1-hexadecanoyl-sn-glycero-3-phosphocholine + H(+). It carries out the reaction 1-hexadecanoyl-2-(5Z,8Z,11Z,14Z-eicosatetraenoyl)-sn-glycero-3-phosphocholine + H2O = 1-hexadecanoyl-sn-glycero-3-phosphocholine + (5Z,8Z,11Z,14Z)-eicosatetraenoate + H(+). The catalysed reaction is 1-hexadecanoyl-2-(9Z,12Z-octadecadienoyl)-sn-glycero-3-phosphoethanolamine + H2O = 1-hexadecanoyl-sn-glycero-3-phosphoethanolamine + (9Z,12Z)-octadecadienoate + H(+). The enzyme catalyses 1-hexadecanoyl-2-(5Z,8Z,11Z,14Z-eicosatetraenoyl)-sn-glycero-3-phosphoethanolamine + H2O = 1-hexadecanoyl-sn-glycero-3-phosphoethanolamine + (5Z,8Z,11Z,14Z)-eicosatetraenoate + H(+). Secretory calcium-dependent phospholipase A2 that primarily targets extracellular phospholipids. Hydrolyzes the ester bond of the fatty acyl group attached at sn-2 position of phospholipids without apparent head group selectivity. Contributes to phospholipid remodeling of low-density lipoprotein (LDL) and high-density lipoprotein (HDL) particles. Hydrolyzes LDL phospholipids releasing unsaturated fatty acids that regulate macrophage differentiation toward foam cells. May act in an autocrine and paracrine manner. Secreted by immature mast cells, acts on nearby fibroblasts upstream to PTDGS to synthesize prostaglandin D2 (PGD2), which in turn promotes mast cell maturation and degranulation via PTGDR. Secreted by epididymal epithelium, acts on immature sperm cells within the duct, modulating the degree of unsaturation of the fatty acyl components of phosphatidylcholines required for acrosome assembly and sperm cell motility. Facilitates the replacement of fatty acyl chains in phosphatidylcholines in sperm membranes from omega-6 and omega-9 to omega-3 polyunsaturated fatty acids (PUFAs). Coupled to lipoxygenase pathway, may process omega-6 PUFAs to generate oxygenated lipid mediators in the male reproductive tract. At pericentrosomal preciliary compartment, negatively regulates ciliogenesis likely by regulating endocytotic recycling of ciliary membrane protein. Coupled to cyclooxygenase pathway provides arachidonate to generate prostaglandin E2 (PGE2), a potent immunomodulatory lipid in inflammation and tumorigenesis. At colonic epithelial barrier, preferentially hydrolyzes phospholipids having arachidonate and docosahexaenoate at sn-2 position, contributing to the generation of oxygenated metabolites involved in colonic stem cell homeostasis. Releases C16:0 and C18:0 lysophosphatidylcholine subclasses from neuron plasma membranes and promotes neurite outgrowth and neuron survival. This chain is Group 3 secretory phospholipase A2 (PLA2G3), found in Bos taurus (Bovine).